Reading from the N-terminus, the 260-residue chain is Glutamate racemase (260 aa).

Substrate contacts are provided by residues 14–15 (DS) and 46–47 (YG). C77 serves as the catalytic Proton donor/acceptor. 78-79 (NT) is a substrate binding site. Catalysis depends on C188, which acts as the Proton donor/acceptor. 189–190 (TH) lines the substrate pocket.

The protein belongs to the aspartate/glutamate racemases family.

It catalyses the reaction L-glutamate = D-glutamate. It participates in cell wall biogenesis; peptidoglycan biosynthesis. In terms of biological role, provides the (R)-glutamate required for cell wall biosynthesis. The protein is Glutamate racemase of Clostridium perfringens (strain SM101 / Type A).